A 505-amino-acid polypeptide reads, in one-letter code: Argininosuccinate lyase (505 aa).

This sequence belongs to the lyase 1 family. Argininosuccinate lyase subfamily.

It localises to the cytoplasm. It carries out the reaction 2-(N(omega)-L-arginino)succinate = fumarate + L-arginine. It participates in amino-acid biosynthesis; L-arginine biosynthesis; L-arginine from L-ornithine and carbamoyl phosphate: step 3/3. The sequence is that of Argininosuccinate lyase from Rhodococcoides fascians (Rhodococcus fascians).